A 574-amino-acid chain; its full sequence is ATP-dependent RNA helicase RhlB (574 aa).

Residues 9 to 37 (VTFSSFDLHPALVAGLESAGFTRCTPIQA) carry the Q motif motif. Residues 40–220 (LPVALPGGDV…YEHMNEPEKL (181 aa)) form the Helicase ATP-binding domain. 53 to 60 (AQTGTGKT) lines the ATP pocket. A DEAD box motif is present at residues 166–169 (DEAD). The 163-residue stretch at 231–393 (RVRQRIYFPS…PVTSELLTPL (163 aa)) folds into the Helicase C-terminal domain. A compositionally biased stretch (basic and acidic residues) spans 423-432 (EQRAAEEQRR). The segment at 423–574 (EQRAAEEQRR…RRLRSLVSGN (152 aa)) is disordered. Positions 435–449 (GRSGPGGGSRSGSGG) are enriched in gly residues. Positions 477-495 (AAAAQTEKPVVAAAAAQAP) are enriched in low complexity. Over residues 506-515 (PRKRRRRRNG) the composition is skewed to basic residues. Low complexity-rich tracts occupy residues 523–535 (PAVA…APAA) and 553–562 (SSGSPSLLGR).

The protein belongs to the DEAD box helicase family. RhlB subfamily. As to quaternary structure, component of the RNA degradosome, which is a multiprotein complex involved in RNA processing and mRNA degradation.

Its subcellular location is the cytoplasm. It carries out the reaction ATP + H2O = ADP + phosphate + H(+). In terms of biological role, DEAD-box RNA helicase involved in RNA degradation. Has RNA-dependent ATPase activity and unwinds double-stranded RNA. This chain is ATP-dependent RNA helicase RhlB, found in Xanthomonas oryzae pv. oryzae (strain KACC10331 / KXO85).